The following is a 261-amino-acid chain: F-actin-capping protein subunit alpha (261 aa).

The protein belongs to the F-actin-capping protein alpha subunit family. In terms of assembly, heterodimer of an alpha and a beta subunit.

In terms of biological role, F-actin-capping proteins bind in a Ca(2+)-independent manner to the fast growing ends of actin filaments (barbed end) thereby blocking the exchange of subunits at these ends. Unlike other capping proteins (such as gelsolin and severin), these proteins do not sever actin filaments. The protein is F-actin-capping protein subunit alpha (CAP1) of Eremothecium gossypii (strain ATCC 10895 / CBS 109.51 / FGSC 9923 / NRRL Y-1056) (Yeast).